The following is a 62-amino-acid chain: Small ribosomal subunit protein eS27 (62 aa).

Zn(2+)-binding residues include cysteine 17, cysteine 20, cysteine 36, and cysteine 39. The C4-type zinc finger occupies 17–39 (CPDCENEQIIFEKASTVVDCVVC).

Belongs to the eukaryotic ribosomal protein eS27 family. Part of the 30S ribosomal subunit. Zn(2+) is required as a cofactor.

This chain is Small ribosomal subunit protein eS27, found in Methanosphaerula palustris (strain ATCC BAA-1556 / DSM 19958 / E1-9c).